A 1046-amino-acid polypeptide reads, in one-letter code: MEPLRKRVKVYQLDNSGKWDDKGTGHVSCIYVDALCAMGLIVRSESDNSVILQTRLSAEDIYQKQQDSLIVWTEPDSQLDLALSFQDSLGCQDIWENILQYQNQRTGSCDSVDLDLPPVSINNLQTINELLEASLPMLDKDKIINSIFKEDLVRSLLDLFDEIEKSGEGGVHLFQIFNIFKNLILFNDTSILEVILSEDYLVRVMGALEYDPEISENNRIKHREFLNQQVVFKQVIKFPSKSLIGTIHQTFRIQYLKDVVLPRVLDDVTFSSLNSLIYFNNIDIVSQIQNDSDFLENLFSEIQKSEKNSEERKDLILFLQDLCNLAKGLQIQSKSTFFTVVVSLGLFKTLSAILDDENVQTRVSCTEIVLSTLLHDPEILRSYLCSPTSGNSKFLVQLINLFITDKDIGVKNQIVEIIKTLLEADSYDSSDFFRLFYDKGIDLLVSPLNEVYKGEPTIPGDPSSNLDSFVLYNIMELVIYCIKHHCYRIKHFIVEEGIAKKILRYTNPTGSGGGGGGGGNSERYLILGSIRFFRSMVNMKDDLYNQHIIQENLFEPIIEVFKSNISRYNLLNSAIIELFQYIYKENIRDLIVYLVERYRELFESVTYTDVLKQLILKYEQIKDSSFESPETSCNNNDSSSNDIDSKPIIGNNKINHNYQRTQREIDEEEEEAYFNRDDDSEDSDDEDELIPISINNNNNNNNNNKQICTNNENNMEKNDDNIEKDNENTNNGNGSSHIKIVDYEDEDDEDDEINKSVESDDIVEKHEIIDKNEKKDEIMKENNDSDNDDNDNNDNDNDNDNNSDIENKNHLNNNGNNENNENNDDVQDKSNNKNNSDKINEDEKIEKQDEMKENLEMEEIDEKVKEKQPKDIKKENQSQPDETVFNGKSNNSNNNNNNNNNNSNNQEIGDNRKTTPKRKLDYEKNESVVSKKIDKSNGPTSIDKDINGCDESPNKKLNNNNSNNNNNNNNNNNNNNNNNNNNNNNNNNNNNNNQNDENELSSASEEEEEQLENGKHIKKFKRGKKDSNNSSNNSNNSSPTPSELHV.

The region spanning 1–101 is the WH1 domain; that stretch reads MEPLRKRVKV…QDIWENILQY (101 aa). Residues 626–1046 are disordered; it reads FESPETSCNN…SSPTPSELHV (421 aa). Acidic residues predominate over residues 665–689; that stretch reads IDEEEEEAYFNRDDDSEDSDDEDEL. A compositionally biased stretch (low complexity) spans 695–713; it reads NNNNNNNNNNKQICTNNEN. Basic and acidic residues predominate over residues 714–727; the sequence is NMEKNDDNIEKDNE. Residues 743-752 are compositionally biased toward acidic residues; the sequence is YEDEDDEDDE. Residues 753 to 783 show a composition bias toward basic and acidic residues; sequence INKSVESDDIVEKHEIIDKNEKKDEIMKENN. Residues 784–803 show a composition bias toward acidic residues; it reads DSDNDDNDNNDNDNDNDNNS. Residues 804 to 820 show a composition bias toward low complexity; the sequence is DIENKNHLNNNGNNENN. Composition is skewed to basic and acidic residues over residues 826-855 and 862-876; these read VQDK…KENL and EKVK…KKEN. The segment covering 889–905 has biased composition (low complexity); that stretch reads SNNSNNNNNNNNNNSNN. Residues 909-935 show a composition bias toward basic and acidic residues; it reads GDNRKTTPKRKLDYEKNESVVSKKIDK. Low complexity predominate over residues 958 to 995; that stretch reads NNNNSNNNNNNNNNNNNNNNNNNNNNNNNNNNNNNNQN. Residues 996-1011 are compositionally biased toward acidic residues; that stretch reads DENELSSASEEEEEQL. Positions 1003–1022 match the Nuclear localization signal motif; the sequence is ASEEEEEQLENGKHIKKFKR. A compositionally biased stretch (low complexity) spans 1028 to 1038; it reads NNSSNNSNNSS.

The protein belongs to the SMEK family. As to quaternary structure, interacts with ppp4c.

The protein localises to the cytoplasm. The protein resides in the cell cortex. Its subcellular location is the nucleus. In terms of biological role, suppresses MEK1 null cell polarity, chemotaxis, and gene expression defects. Required for proper cytokinesis during vegetative growth, timely exit from the mound stage during development, and myosin II assembly. May be a regulatory subunit of serine/threonine-protein phosphatase 4 (PP4) and may control localization of PP4 to the nucleus. Involved in the regulation of some ppp4c functions, such as developmental progression, chemotaxis, expression of stress response genes and cell movement. The sequence is that of Suppressor of Mek1 (smkA) from Dictyostelium discoideum (Social amoeba).